The primary structure comprises 239 residues: Serine protease SplD (239 aa).

The signal sequence occupies residues 1-36; sequence MNKNIIIKSIAALTILTSITGVGTTVVDGIQQTAKA. Active-site charge relay system residues include histidine 75, aspartate 114, and serine 192.

Belongs to the peptidase S1B family.

It localises to the secreted. This chain is Serine protease SplD (splD), found in Staphylococcus aureus (strain COL).